We begin with the raw amino-acid sequence, 286 residues long: MAMISYSTIVVALLASFMICSVSANFQRDVEITWGDGRGQITNNGDLLTLSLDKASGSGFQSKNEYLFGKIDMQIKLVAGNSAGTVTAYYLKSPGSTWDEIDFEFLGNLSGDPYTLHTNVFTQGKGDREQQFKLWFDPTSDFHTYSILWNPQRIIFSVDGTPIREFKNMESQGTLFPKNQPMRMYSSLWNAEEWATRGGLVKTDWSKAPFTASYRGFNEEACVVINGQSSCPNVSGQGSTGSWLSQELDSTGQEQMRWVQNNYMIYNYCTDAKRFPQGLPRECLAA.

Residues 1–24 form the signal peptide; it reads MAMISYSTIVVALLASFMICSVSA. The GH16 domain maps to 25-214; that stretch reads NFQRDVEITW…WSKAPFTASY (190 aa). The active-site Nucleophile is the Glu100. Catalysis depends on Glu104, which acts as the Proton donor. Glu104 contributes to the xyloglucan binding site. N-linked (GlcNAc...) asparagine glycosylation occurs at Asn108. Residues 117–119, 127–129, 193–194, and Gly198 contribute to the xyloglucan site; these read HTN, DRE, and EW. An intrachain disulfide couples Cys222 to Cys231. An N-linked (GlcNAc...) asparagine glycan is attached at Asn233. The cysteines at positions 269 and 283 are disulfide-linked. Arg274 contacts xyloglucan.

The protein belongs to the glycosyl hydrolase 16 family. XTH group 2 subfamily. In terms of processing, contains at least one intrachain disulfide bond essential for its enzymatic activity.

It is found in the secreted. It localises to the cell wall. The protein localises to the extracellular space. Its subcellular location is the apoplast. It carries out the reaction breaks a beta-(1-&gt;4) bond in the backbone of a xyloglucan and transfers the xyloglucanyl segment on to O-4 of the non-reducing terminal glucose residue of an acceptor, which can be a xyloglucan or an oligosaccharide of xyloglucan.. In terms of biological role, catalyzes xyloglucan endohydrolysis (XEH) and/or endotransglycosylation (XET). Cleaves and religates xyloglucan polymers, an essential constituent of the primary cell wall, and thereby participates in cell wall construction of growing tissues. This Arabidopsis thaliana (Mouse-ear cress) protein is Probable xyloglucan endotransglucosylase/hydrolase protein 23 (XTH23).